Reading from the N-terminus, the 154-residue chain is Terephthalate 1,2-dioxygenase, terminal oxygenase component subunit beta 2 (154 aa).

Belongs to the bacterial ring-hydroxylating dioxygenase beta subunit family. In terms of assembly, heterotetramer composed of 2 alpha (TphA2I and TphA2II) and 2 beta (TphA3I and TphA3II) subunits. Part of a multicomponent enzyme system composed of a reductase (TphA1I or TphA1II) and a two-subunit oxygenase component (TphA2I or TphA2II and TphA3I or TphA3II). The cofactor is Fe cation.

It catalyses the reaction terephthalate + NADH + O2 + H(+) = (3S,4R)-3,4-dihydroxycyclohexa-1,5-diene-1,4-dicarboxylate + NAD(+). Inhibited by EDTA. Component of the terephthalate 1,2-dioxygenase multicomponent enzyme system which catalyzes the dioxygenation of terephthalate (TER/TPA) to 1,2-dihydroxy-3,5-cyclohexadiene-1,4-dicarboxylic acid (DCD). It can also use 2,5-dicarboxypyridine (PDC) and 1,4-napthalenedicarboxylic acid (NDC) as substrates, and preferentially uses NADPH which is the physiological electron donor. The chain is Terephthalate 1,2-dioxygenase, terminal oxygenase component subunit beta 2 (tphA3II) from Comamonas sp.